The chain runs to 892 residues: UPF0182 protein MCA2716 (892 aa).

A run of 7 helical transmembrane segments spans residues 7 to 27 (LLTS…AIVL), 57 to 77 (ILSG…FWAA), 107 to 127 (GALP…ALPF), 163 to 183 (ILVL…VMVA), 206 to 226 (IHLN…YVLQ), 252 to 272 (LPLI…ALWF), and 281 to 301 (LALT…IDVV).

It belongs to the UPF0182 family.

The protein localises to the cell membrane. This is UPF0182 protein MCA2716 from Methylococcus capsulatus (strain ATCC 33009 / NCIMB 11132 / Bath).